Consider the following 762-residue polypeptide: 5-methyltetrahydropteroyltriglutamate--homocysteine methyltransferase (762 aa).

Residues arginine 17 to lysine 20 and lysine 111 contribute to the 5-methyltetrahydropteroyltri-L-glutamate site. Residues isoleucine 435–serine 437 and glutamate 488 each bind L-homocysteine. Residues isoleucine 435–serine 437 and glutamate 488 contribute to the L-methionine site. 5-methyltetrahydropteroyltri-L-glutamate-binding positions include arginine 519–cysteine 520 and tryptophan 565. Residue aspartate 603 coordinates L-homocysteine. Position 603 (aspartate 603) interacts with L-methionine. Residue glutamate 609 participates in 5-methyltetrahydropteroyltri-L-glutamate binding. Zn(2+)-binding residues include histidine 645, cysteine 647, and glutamate 669. The Proton donor role is filled by histidine 698. Residue cysteine 730 coordinates Zn(2+).

The protein belongs to the vitamin-B12 independent methionine synthase family. Requires Zn(2+) as cofactor.

It carries out the reaction 5-methyltetrahydropteroyltri-L-glutamate + L-homocysteine = tetrahydropteroyltri-L-glutamate + L-methionine. It functions in the pathway amino-acid biosynthesis; L-methionine biosynthesis via de novo pathway; L-methionine from L-homocysteine (MetE route): step 1/1. In terms of biological role, catalyzes the transfer of a methyl group from 5-methyltetrahydrofolate to homocysteine resulting in methionine formation. This is 5-methyltetrahydropteroyltriglutamate--homocysteine methyltransferase from Bacillus cereus (strain AH820).